Consider the following 308-residue polypeptide: Ribose 1,5-bisphosphate isomerase (308 aa).

Residues 24–27 (RGAG) and arginine 67 each bind substrate. Cysteine 129 (proton acceptor) is an active-site residue. Residue aspartate 198 is the Proton donor of the active site. Residues 208-209 (NK) and lysine 234 contribute to the substrate site.

This sequence belongs to the eIF-2B alpha/beta/delta subunits family. R15P isomerase subfamily.

It catalyses the reaction alpha-D-ribose 1,5-bisphosphate = D-ribulose 1,5-bisphosphate. Its function is as follows. Catalyzes the isomerization of ribose 1,5-bisphosphate (R15P) to ribulose 1,5-bisphosphate (RuBP), the CO(2) acceptor and substrate for RubisCO. Functions in an archaeal AMP degradation pathway, together with AMP phosphorylase and RubisCO. This chain is Ribose 1,5-bisphosphate isomerase, found in Methanocaldococcus jannaschii (strain ATCC 43067 / DSM 2661 / JAL-1 / JCM 10045 / NBRC 100440) (Methanococcus jannaschii).